The primary structure comprises 198 residues: Ion-translocating oxidoreductase complex subunit B (198 aa).

Positions 1-26 (MTTIMIAVLAIALLATLFGAILGFAS) are hydrophobic. The region spanning 32-90 (EADPIVDQIDAILPQTQCGQCGYPGCRPYAEAIANGDSINKCPPGGQATIEKLADLMGV) is the 4Fe-4S domain. 12 residues coordinate [4Fe-4S] cluster: cysteine 49, cysteine 52, cysteine 57, cysteine 73, cysteine 114, cysteine 117, cysteine 120, cysteine 124, cysteine 144, cysteine 147, cysteine 150, and cysteine 154. 4Fe-4S ferredoxin-type domains are found at residues 105-134 (KVAF…GGTK) and 135-164 (ALHT…MIPL).

It belongs to the 4Fe4S bacterial-type ferredoxin family. RnfB subfamily. As to quaternary structure, the complex is composed of six subunits: RnfA, RnfB, RnfC, RnfD, RnfE and RnfG. The cofactor is [4Fe-4S] cluster.

Its subcellular location is the cell inner membrane. Part of a membrane-bound complex that couples electron transfer with translocation of ions across the membrane. This Vibrio vulnificus (strain CMCP6) protein is Ion-translocating oxidoreductase complex subunit B.